The sequence spans 351 residues: S-adenosylmethionine:tRNA ribosyltransferase-isomerase (351 aa).

It belongs to the QueA family. In terms of assembly, monomer.

It localises to the cytoplasm. The enzyme catalyses 7-aminomethyl-7-carbaguanosine(34) in tRNA + S-adenosyl-L-methionine = epoxyqueuosine(34) in tRNA + adenine + L-methionine + 2 H(+). It participates in tRNA modification; tRNA-queuosine biosynthesis. Transfers and isomerizes the ribose moiety from AdoMet to the 7-aminomethyl group of 7-deazaguanine (preQ1-tRNA) to give epoxyqueuosine (oQ-tRNA). The protein is S-adenosylmethionine:tRNA ribosyltransferase-isomerase of Idiomarina loihiensis (strain ATCC BAA-735 / DSM 15497 / L2-TR).